Here is a 100-residue protein sequence, read N- to C-terminus: MANPKLTLNDVLIRPIITEKSFSGEEYNKYTFEVHRDASKHLIKEAIEKIFNVKVEKINVINVKPKPKRRGIAVGRTRSWKKAVVTLVEGYRIKELEGQH.

It belongs to the universal ribosomal protein uL23 family. Part of the 50S ribosomal subunit. Contacts protein L29, and trigger factor when it is bound to the ribosome.

Functionally, one of the early assembly proteins it binds 23S rRNA. One of the proteins that surrounds the polypeptide exit tunnel on the outside of the ribosome. Forms the main docking site for trigger factor binding to the ribosome. This is Large ribosomal subunit protein uL23 from Kosmotoga olearia (strain ATCC BAA-1733 / DSM 21960 / TBF 19.5.1).